The primary structure comprises 226 residues: RNA annealing protein YRA1 (226 aa).

Residues 1-62 (MSANLDKSLD…PIRKNTRAPP (62 aa)) are disordered. An N-acetylserine modification is found at Ser2. 2 positions are modified to phosphoserine: Ser8 and Ser100. The RRM domain occupies 78–158 (VKVNVEGLPR…SRLRLNLIVD (81 aa)). A disordered region spans residues 173-226 (AMPQKGGNAPRPVKRGPNRKAAMAKSQNKPKREKPAKKSLEDLDKEMADYFEKK). A compositionally biased stretch (basic and acidic residues) spans 208–226 (AKKSLEDLDKEMADYFEKK).

As to quaternary structure, component of the transcription/export (TREX) complex, which is at least is formed of SUB2, TEX1 and YRA1 and the THO complex composed of HPR1, MFT1, THO2 and THP1. Interacts with RDS3 and YRA2.

Its subcellular location is the nucleus. Functionally, RNA-binding RNA annealing protein. May have a role in pre-mRNA metabolism. Component the TREX complex, which operates in coupling transcription elongation to mRNA export. The polypeptide is RNA annealing protein YRA1 (YRA1) (Saccharomyces cerevisiae (strain ATCC 204508 / S288c) (Baker's yeast)).